The chain runs to 88 residues: Small ribosomal subunit protein uS15c (88 aa).

This sequence belongs to the universal ribosomal protein uS15 family. As to quaternary structure, part of the 30S ribosomal subunit.

The protein resides in the plastid. It localises to the chloroplast. The sequence is that of Small ribosomal subunit protein uS15c (rps15) from Capsella bursa-pastoris (Shepherd's purse).